Consider the following 1256-residue polypeptide: Cohesin subunit SA-3 (1256 aa).

Residues 1 to 22 show a composition bias toward low complexity; that stretch reads MPTLWSPSTQHHGSSSGSMSSP. Positions 1-110 are disordered; that stretch reads MPTLWSPSTQ…GGNDKNKSVP (110 aa). The span at 72-83 shows a compositional bias: basic residues; sequence RNVRKRAAKRPP. One can recognise an SCD domain in the interval 324-409; the sequence is FVHRYRDILP…NRFKDRMVSM (86 aa). 2 disordered regions span residues 1096 to 1169 and 1230 to 1256; these read RRLQ…GPEL and KLLH…MEDF. Residues 1113 to 1125 are compositionally biased toward polar residues; that stretch reads NSGPTTPTLTSTA. A compositionally biased stretch (basic residues) spans 1126-1140; it reads VKRRQSPRTVGKRQK. Pro residues predominate over residues 1144–1166; the sequence is GPGPGPGPGPGPGPGPGPGPGPG. Ser1234 bears the Phosphoserine mark.

It belongs to the SCC3 family. In terms of assembly, component of the meiosis-specific cohesin complex, which also contains the SMC1 (SMC1A or SMC1B) and SMC3 heterodimer. Such complex likely contains RAD21, or the meiosis-specific related protein REC8. Interacts with CCDC79/TERB1; recruiting cohesin to telomeres to develop structural rigidity. In terms of processing, phosphorylated. Testis specific.

Its subcellular location is the nucleus. The protein resides in the chromosome. In terms of biological role, meiosis specific component of cohesin complex. The cohesin complex is required for the cohesion of sister chromatids after DNA replication. The cohesin complex apparently forms a large proteinaceous ring within which sister chromatids can be trapped. At anaphase, the complex is cleaved and dissociates from chromatin, allowing sister chromatids to segregate. The meiosis-specific cohesin complex probably replaces mitosis specific cohesin complex when it dissociates from chromatin during prophase I. The sequence is that of Cohesin subunit SA-3 (Stag3) from Rattus norvegicus (Rat).